A 110-amino-acid chain; its full sequence is MSGPTIAAEGVTNPPIDELLTKTDSKYKLVLYSAKRARQINAYYSQLGEGLLEYVGPLVDTHVQEKPLSIALREINEDLLTCEDVDPAELAAEEAAAQAAAADAGSSFSE.

This sequence belongs to the RNA polymerase subunit omega family. In terms of assembly, the RNAP catalytic core consists of 2 alpha, 1 beta, 1 beta' and 1 omega subunit. When a sigma factor is associated with the core the holoenzyme is formed, which can initiate transcription.

It catalyses the reaction RNA(n) + a ribonucleoside 5'-triphosphate = RNA(n+1) + diphosphate. Functionally, promotes RNA polymerase assembly. Latches the N- and C-terminal regions of the beta' subunit thereby facilitating its interaction with the beta and alpha subunits. The protein is DNA-directed RNA polymerase subunit omega of Nocardioides sp. (strain ATCC BAA-499 / JS614).